The following is a 653-amino-acid chain: Zinc finger CCCH domain-containing protein 54 (653 aa).

Positions Asn242 to Ser261 are disordered. The C3H1-type zinc finger occupies Leu260–Val287. Positions Ser313 to Asp396 constitute an HTH OST-type domain. One can recognise an RRM domain in the interval His422 to Glu497. The stretch at Arg537 to Ser565 forms a coiled coil. Residues Pro598–Tyr623 are disordered. A compositionally biased stretch (polar residues) spans Val609 to Gly620.

This chain is Zinc finger CCCH domain-containing protein 54, found in Oryza sativa subsp. japonica (Rice).